The following is a 352-amino-acid chain: Isoflavone-7-O-methyltransferase 9 (352 aa).

Val118 to Tyr127 contacts substrate. S-adenosyl-L-methionine contacts are provided by Gly196, Asp219, Asp239, Met240, and Lys253. His257 serves as the catalytic Proton acceptor.

It belongs to the class I-like SAM-binding methyltransferase superfamily. Cation-independent O-methyltransferase family. COMT subfamily. In terms of assembly, homodimer.

The enzyme catalyses a 7-hydroxyisoflavone + S-adenosyl-L-methionine = a 7-methoxyisoflavone + S-adenosyl-L-homocysteine + H(+). It participates in phytoalexin biosynthesis; medicarpin biosynthesis. In terms of biological role, transfers a methyl group to 7-hydroxyls of the isoflavones daidzein, genistein and 6,7,4'-trihydroxyisoflavone. Can also methylate (+)6a-hydroxymaackiain with lower efficiency. The polypeptide is Isoflavone-7-O-methyltransferase 9 (Medicago sativa (Alfalfa)).